The sequence spans 212 residues: Large ribosomal subunit protein uL4 (212 aa).

Belongs to the universal ribosomal protein uL4 family. As to quaternary structure, part of the 50S ribosomal subunit.

One of the primary rRNA binding proteins, this protein initially binds near the 5'-end of the 23S rRNA. It is important during the early stages of 50S assembly. It makes multiple contacts with different domains of the 23S rRNA in the assembled 50S subunit and ribosome. In terms of biological role, forms part of the polypeptide exit tunnel. This Phenylobacterium zucineum (strain HLK1) protein is Large ribosomal subunit protein uL4.